Reading from the N-terminus, the 61-residue chain is Protein translocase subunit SecE (61 aa).

Residues 39–59 (VGIIIIGLIGFILSIVSQVLF) form a helical membrane-spanning segment.

Belongs to the SecE/SEC61-gamma family. In terms of assembly, component of the Sec protein translocase complex. Heterotrimer consisting of SecY (alpha), SecG (beta) and SecE (gamma) subunits. The heterotrimers can form oligomers, although 1 heterotrimer is thought to be able to translocate proteins. Interacts with the ribosome. May interact with SecDF, and other proteins may be involved.

Its subcellular location is the cell membrane. In terms of biological role, essential subunit of the Sec protein translocation channel SecYEG. Clamps together the 2 halves of SecY. May contact the channel plug during translocation. The polypeptide is Protein translocase subunit SecE (Methanosphaera stadtmanae (strain ATCC 43021 / DSM 3091 / JCM 11832 / MCB-3)).